The chain runs to 537 residues: Frizzled-4 (537 aa).

The first 36 residues, 1 to 36 (MAWRGAGPSVPGAPGGVGLSLGLLLQLLLLLGPARG), serve as a signal peptide directing secretion. The Extracellular segment spans residues 37–212 (FGDEEERRCD…KCGYDAGLYS (176 aa)). An FZ domain is found at 40-161 (EEERRCDPIR…NDHNHMCMEG (122 aa)). Disulfide bonds link cysteine 45/cysteine 106, cysteine 53/cysteine 99, cysteine 90/cysteine 128, cysteine 117/cysteine 158, cysteine 121/cysteine 145, cysteine 181/cysteine 200, cysteine 204/cysteine 282, and cysteine 302/cysteine 377. Residue asparagine 59 is glycosylated (N-linked (GlcNAc...) asparagine). A glycan (N-linked (GlcNAc...) asparagine) is linked at asparagine 144. Residues 213 to 243 (RSAKEFTDIWMAVWASLCFISTAFTVLTFLI) form a helical membrane-spanning segment. At 244-249 (DSSRFS) the chain is on the cytoplasmic side. A helical transmembrane segment spans residues 250–275 (YPERPIIFLSMCYNIYSIAYIVRLTV). Topologically, residues 276–299 (GRERISCDFEEAAEPVLIQEGLKN) are extracellular. Residues 300 to 333 (TGCAIIFLLMYFFGMASSIWWVILTLTWFLAAGL) traverse the membrane as a helical segment. The Cytoplasmic segment spans residues 334 to 336 (KWG). Residues 337–365 (HEAIEMHSSYFHIAAWAIPAVKTIVILIM) form a helical membrane-spanning segment. Topologically, residues 366–383 (RLVDADELTGLCYVGNQN) are extracellular. The helical transmembrane segment at 384 to 418 (LDALTGFVVAPLFTYLVIGTLFIAAGLVALFKIRS) threads the bilayer. The Cytoplasmic portion of the chain corresponds to 419 to 431 (NLQKDGTKTDKLE). A helical membrane pass occupies residues 432 to 460 (RLMVKIGVFSVLYTVPATCVIACYFYEIS). Topologically, residues 461–473 (NWALFRYSADDSN) are extracellular. The chain crosses the membrane as a helical span at residues 474–495 (MAVEMLKIFMSLLVGITSGMWI). At 496-537 (WSAKTLHTWQKCSNRLVNSGKVKREKRGNGWVKPGKGSETVV) the chain is on the cytoplasmic side. Residues 499-504 (KTLHTW) carry the Lys-Thr-X-X-X-Trp motif, mediates interaction with the PDZ domain of Dvl family members motif. Positions 535-537 (TVV) match the PDZ-binding motif.

It belongs to the G-protein coupled receptor Fz/Smo family. As to quaternary structure, interacts with MAGI3 and NDP. Component of a complex, at least composed of TSPAN12, FZD4 and norrin (NDP). Interacts (via FZ domain) with TSKU; TSKU competes with WNT2B for binding to FZD4, inhibiting Wnt signaling and repressing peripheral eye development. Interacts with glypican GPC3. Ubiquitinated by ZNRF3, leading to its degradation by the proteasome. Almost ubiquitous. Largely expressed in adult heart, skeletal muscle, ovary, and fetal kidney. Moderate amounts in adult liver, kidney, pancreas, spleen, and fetal lung, and small amounts in placenta, adult lung, prostate, testis, colon, fetal brain and liver.

Its subcellular location is the cell membrane. Receptor for Wnt proteins. Most frizzled receptors are coupled to the beta-catenin (CTNNB1) canonical signaling pathway, which leads to the activation of disheveled proteins, inhibition of GSK-3 kinase, nuclear accumulation of beta-catenin (CTNNB1) and activation of Wnt target genes. Plays a critical role in retinal vascularization by acting as a receptor for Wnt proteins and norrin (NDP). In retina, it can be activated by Wnt protein-binding and also by Wnt-independent signaling via binding of norrin (NDP), promoting in both cases beta-catenin (CTNNB1) accumulation and stimulation of LEF/TCF-mediated transcriptional programs. A second signaling pathway involving PKC and calcium fluxes has been seen for some family members, but it is not yet clear if it represents a distinct pathway or if it can be integrated in the canonical pathway, as PKC seems to be required for Wnt-mediated inactivation of GSK-3 kinase. Both pathways seem to involve interactions with G-proteins. May be involved in transduction and intercellular transmission of polarity information during tissue morphogenesis and/or in differentiated tissues. This chain is Frizzled-4 (FZD4), found in Homo sapiens (Human).